The sequence spans 286 residues: ADLGYGPATPAAPAAGYTPATPAAPAGADAAGKATTEEQKLIEKINAGFKAALAGAGVQPADKYRTFVATFGPASNKAFAEGLSGEPKGAAESSSKAALTSKLDAAYKLAYKTAEGATPEAKYDAYVATLSEALRIIAGTLEVHAVKPAAEEVKVIPAGELQVIEKVDAAFKVAATAANAAPANDKFTVFEAAFNDEIKASTGGAYESYKFIPALEAAVKQAYAATVATAPEVKYTVFETALKKAITAMSEAQKAAKPAAAATATATAAVGAATGAATAATGGYKV.

Low complexity predominate over residues Ala-1–Ala-34. The tract at residues Ala-1–Thr-35 is disordered.

Belongs to the Poa p IX/Phl p VI allergen family.

The protein localises to the secreted. This Phleum pratense (Common timothy) protein is Pollen allergen Phl p 5a.